A 554-amino-acid polypeptide reads, in one-letter code: Malate synthase 2 (554 aa).

The Proton acceptor role is filled by Arg-177. Asp-457 functions as the Proton donor in the catalytic mechanism. The short motif at 552-554 (SKL) is the SKL peroxisome targeting motif element.

The protein belongs to the malate synthase family. Interacts with PEX9.

Its subcellular location is the peroxisome matrix. It carries out the reaction glyoxylate + acetyl-CoA + H2O = (S)-malate + CoA + H(+). Its function is as follows. Allantoin metabolism-specific malate synthase involved in the recycling the glyoxylate generated during allantoin degradation by the ureidoglycollate (UG) hydrolase reaction. This Saccharomyces cerevisiae (strain ATCC 204508 / S288c) (Baker's yeast) protein is Malate synthase 2.